Reading from the N-terminus, the 265-residue chain is S-adenosylmethionine decarboxylase proenzyme (265 aa).

Residue Ser-114 is the Schiff-base intermediate with substrate; via pyruvic acid of the active site. Pyruvic acid (Ser); by autocatalysis is present on Ser-114. His-119 functions as the Proton acceptor; for processing activity in the catalytic mechanism. The active-site Proton donor; for catalytic activity is Cys-142.

It belongs to the prokaryotic AdoMetDC family. Type 2 subfamily. Heterooctamer of four alpha and four beta chains arranged as a tetramer of alpha/beta heterodimers. Requires pyruvate as cofactor. Is synthesized initially as an inactive proenzyme. Formation of the active enzyme involves a self-maturation process in which the active site pyruvoyl group is generated from an internal serine residue via an autocatalytic post-translational modification. Two non-identical subunits are generated from the proenzyme in this reaction, and the pyruvate is formed at the N-terminus of the alpha chain, which is derived from the carboxyl end of the proenzyme. The post-translation cleavage follows an unusual pathway, termed non-hydrolytic serinolysis, in which the side chain hydroxyl group of the serine supplies its oxygen atom to form the C-terminus of the beta chain, while the remainder of the serine residue undergoes an oxidative deamination to produce ammonia and the pyruvoyl group blocking the N-terminus of the alpha chain.

The enzyme catalyses S-adenosyl-L-methionine + H(+) = S-adenosyl 3-(methylsulfanyl)propylamine + CO2. The protein operates within amine and polyamine biosynthesis; S-adenosylmethioninamine biosynthesis; S-adenosylmethioninamine from S-adenosyl-L-methionine: step 1/1. Catalyzes the decarboxylation of S-adenosylmethionine to S-adenosylmethioninamine (dcAdoMet), the propylamine donor required for the synthesis of the polyamines spermine and spermidine from the diamine putrescine. In Buchnera aphidicola subsp. Acyrthosiphon pisum (strain APS) (Acyrthosiphon pisum symbiotic bacterium), this protein is S-adenosylmethionine decarboxylase proenzyme.